Consider the following 120-residue polypeptide: Hydrogenase maturation factor HypA (120 aa).

Position 2 (His-2) interacts with Ni(2+). 4 residues coordinate Zn(2+): Cys-73, His-76, Cys-89, and Cys-92.

This sequence belongs to the HypA/HybF family.

Functionally, involved in the maturation of [NiFe] hydrogenases. Required for nickel insertion into the metal center of the hydrogenase. In Deinococcus radiodurans (strain ATCC 13939 / DSM 20539 / JCM 16871 / CCUG 27074 / LMG 4051 / NBRC 15346 / NCIMB 9279 / VKM B-1422 / R1), this protein is Hydrogenase maturation factor HypA.